A 294-amino-acid chain; its full sequence is Cytidine deaminase (294 aa).

CMP/dCMP-type deaminase domains are found at residues 48 to 168 (DDNT…FGPN) and 187 to 294 (ETTD…YYTF). 89 to 91 (NME) is a substrate binding site. H102 provides a ligand contact to Zn(2+). E104 functions as the Proton donor in the catalytic mechanism. 2 residues coordinate Zn(2+): C129 and C132.

Belongs to the cytidine and deoxycytidylate deaminase family. In terms of assembly, homodimer. The cofactor is Zn(2+).

The enzyme catalyses cytidine + H2O + H(+) = uridine + NH4(+). It catalyses the reaction 2'-deoxycytidine + H2O + H(+) = 2'-deoxyuridine + NH4(+). In terms of biological role, this enzyme scavenges exogenous and endogenous cytidine and 2'-deoxycytidine for UMP synthesis. This is Cytidine deaminase from Photorhabdus laumondii subsp. laumondii (strain DSM 15139 / CIP 105565 / TT01) (Photorhabdus luminescens subsp. laumondii).